Here is a 68-residue protein sequence, read N- to C-terminus: Large ribosomal subunit protein uL29 (68 aa).

The protein belongs to the universal ribosomal protein uL29 family.

This chain is Large ribosomal subunit protein uL29, found in Finegoldia magna (strain ATCC 29328 / DSM 20472 / WAL 2508) (Peptostreptococcus magnus).